Reading from the N-terminus, the 429-residue chain is ATP-sensitive inward rectifier potassium channel 12 (429 aa).

The Cytoplasmic portion of the chain corresponds to 1–76 (MTAGRVNPYS…IADMFTTCVD (76 aa)). Residues 77–103 (IRWRYMLLLFSLAFLVSWLLFGLIFWL) form a helical membrane-spanning segment. Positions 78 and 80 each coordinate a 1,2-diacyl-sn-glycero-3-phospho-(1D-myo-inositol-4,5-bisphosphate). The Extracellular portion of the chain corresponds to 104–129 (IALIHGDLENPGGDDTFKPCVLQVNG). Cys-123 and Cys-155 are oxidised to a cystine. An intramembrane region (helical; Pore-forming) is located at residues 130–146 (FVAAFLFSIETQTTIGY). Residues Thr-143, Ile-144, Gly-145, and Tyr-146 each contribute to the K(+) site. The Selectivity filter signature appears at 143–148 (TIGYGF). Over 147 to 155 (GFRCVTEEC) the chain is Extracellular. A helical transmembrane segment spans residues 156 to 183 (PLAVFMVVVQSIVGCIIDSFMIGAIMAK). Lys-183 and Lys-188 together coordinate a 1,2-diacyl-sn-glycero-3-phospho-(1D-myo-inositol-4,5-bisphosphate). Topologically, residues 184–429 (MARPKKRAQT…QRSYRRESEI (246 aa)) are cytoplasmic. Positions 386 to 407 (RDEDEEDDDSRGLDDLSPDNRH) are disordered. Basic and acidic residues predominate over residues 395–407 (SRGLDDLSPDNRH).

It belongs to the inward rectifier-type potassium channel family. As to quaternary structure, homotetramer.

Its subcellular location is the membrane. It localises to the cell membrane. It is found in the sarcolemma. The protein localises to the T-tubule. The enzyme catalyses K(+)(in) = K(+)(out). Activated by phosphatidylinositol 4,5-bisphosphate (PtdIns(4,5)P2). PtdIns(4,5)P2 binding to the cytoplasmic side of the channel triggers a conformation change leading to channel opening. Functionally, inward rectifying potassium channel that probably participates in controlling the resting membrane potential in electrically excitable cells. Probably participates in establishing action potential waveform and excitability of neuronal and muscle tissues. Inward rectifier potassium channels are characterized by a greater tendency to allow potassium to flow into the cell rather than out of it. Their voltage dependence is regulated by the concentration of extracellular potassium; as external potassium is raised, the voltage range of the channel opening shifts to more positive voltages. The inward rectification is mainly due to the blockage of outward current by internal magnesium. This is ATP-sensitive inward rectifier potassium channel 12 (KCNJ12) from Gallus gallus (Chicken).